The following is a 95-amino-acid chain: Large ribosomal subunit protein eL30 (95 aa).

The protein belongs to the eukaryotic ribosomal protein eL30 family.

This is Large ribosomal subunit protein eL30 from Methanospirillum hungatei JF-1 (strain ATCC 27890 / DSM 864 / NBRC 100397 / JF-1).